The chain runs to 401 residues: Nicotinate phosphoribosyltransferase (401 aa).

His221 is subject to Phosphohistidine; by autocatalysis.

Belongs to the NAPRTase family. Post-translationally, transiently phosphorylated on a His residue during the reaction cycle. Phosphorylation strongly increases the affinity for substrates and increases the rate of nicotinate D-ribonucleotide production. Dephosphorylation regenerates the low-affinity form of the enzyme, leading to product release.

It carries out the reaction nicotinate + 5-phospho-alpha-D-ribose 1-diphosphate + ATP + H2O = nicotinate beta-D-ribonucleotide + ADP + phosphate + diphosphate. The protein operates within cofactor biosynthesis; NAD(+) biosynthesis; nicotinate D-ribonucleotide from nicotinate: step 1/1. In terms of biological role, catalyzes the synthesis of beta-nicotinate D-ribonucleotide from nicotinate and 5-phospho-D-ribose 1-phosphate at the expense of ATP. The protein is Nicotinate phosphoribosyltransferase of Edwardsiella ictaluri (strain 93-146).